We begin with the raw amino-acid sequence, 420 residues long: Tyrosine--tRNA ligase (420 aa).

Residue Tyr38 coordinates L-tyrosine. The 'HIGH' region signature appears at 43–52; that stretch reads PTGDSLHIGH. L-tyrosine-binding residues include Tyr169 and Gln173. Residues 231–235 carry the 'KMSKS' region motif; that stretch reads KFGKS. Lys234 is a binding site for ATP. The region spanning 353 to 419 is the S4 RNA-binding domain; sequence KNIVDFLVDT…GKRKYTLVTI (67 aa).

It belongs to the class-I aminoacyl-tRNA synthetase family. TyrS type 1 subfamily. Homodimer.

It is found in the cytoplasm. It catalyses the reaction tRNA(Tyr) + L-tyrosine + ATP = L-tyrosyl-tRNA(Tyr) + AMP + diphosphate + H(+). Its function is as follows. Catalyzes the attachment of tyrosine to tRNA(Tyr) in a two-step reaction: tyrosine is first activated by ATP to form Tyr-AMP and then transferred to the acceptor end of tRNA(Tyr). In Lactobacillus acidophilus (strain ATCC 700396 / NCK56 / N2 / NCFM), this protein is Tyrosine--tRNA ligase.